A 603-amino-acid chain; its full sequence is MKIQKGLFFLQRSIKNVLRKIIKFIKGYVKDIIKEINVKSLKKYKYNLFFEFIGSFLFVFFISIYMLNSNSNEEYIIKHTKQINPYKTNDILIPGHNNFEAEINNIKYMNNLNQERKNVVASILLEKYDNEYKGNNKSKREVERDDDKISNNLQNEFEKDNEKKKNYDNINEKEISTTSDGKIKDMEDPKNISNKNENYDNTNMELKNEKINNKVNDEKNIKNEDDINNKENMLKSVDKIIFKEPVNEYSKIKIEDINNINLKDIDQYEVLKNSENKKSSNHAIYSFVGCFIYVIFILLGAHINPAYTYALWLTEPKKYGFALSTLYITFQYFGGIVASIICAHLYGSIFIYTLLPKKEIIKTFLCEFISTFLITLLLLSLYNYKKKFMEENKNDESLTFNINKLRNMSSLYNFNTYEDFYSYDMFSTNQNRKYNSFLYIDNKYIKYIMNHIFYLLFIFFSLLFFVFVTNTTLNPMFSTSTLYTYLYYKIFKASNSFKIYSIFISFLSITKIFQLLIFYIQSLPLWIGPYFGSAFAATFLSLFKENEEEIINIIDTNVYSSYNKKKEQIPLIDKNSAKQNAYLIEYNDNIHNNSYNYLLPSVF.

Residues 40–70 (SLKKYKYNLFFEFIGSFLFVFFISIYMLNSN) traverse the membrane as a helical segment. Basic and acidic residues-rich tracts occupy residues 135-149 (NNKSKREVERDDDKI) and 156-190 (EFEKDNEKKKNYDNINEKEISTTSDGKIKDMEDPK). A disordered region spans residues 135–200 (NNKSKREVER…NISNKNENYD (66 aa)). Over residues 191 to 200 (NISNKNENYD) the composition is skewed to polar residues. The next 5 membrane-spanning stretches (helical) occupy residues 282–299 (HAIYSFVGCFIYVIFILL), 321–346 (FALSTLYITFQYFGGIVASIICAHLY), 360–393 (IIKTFLCEFISTFLITLLLLSLYNYKKKFMEENK), 442–471 (NKYIKYIMNHIFYLLFIFFSLLFFVFVTNT), and 509–542 (ITKIFQLLIFYIQSLPLWIGPYFGSAFAATFLSL).

Belongs to the MIP/aquaporin (TC 1.A.8) family.

It is found in the endomembrane system. The catalysed reaction is H2O(in) = H2O(out). It catalyses the reaction glycerol(in) = glycerol(out). In terms of biological role, required for sporozoite development in the mosquito vector. This is Aquaporin-2 from Plasmodium falciparum (isolate NF54).